Reading from the N-terminus, the 1013-residue chain is MDIS1-interacting receptor like kinase 1 (1013 aa).

An N-terminal signal peptide occupies residues 1-23; sequence MKMKIIVLFLYYCYIGSTSSVLA. The Extracellular portion of the chain corresponds to 24–633; it reads SIDNVNELSV…SSHSSLHGKR (610 aa). N-linked (GlcNAc...) asparagine glycosylation is found at Asn61, Asn82, Asn101, Asn137, Asn146, Asn151, and Asn155. 22 LRR repeats span residues 70–94, 95–117, 119–137, 139–163, 164–186, 187–213, 215–234, 235–259, 260–283, 284–307, 308–331, 333–355, 357–379, 381–403, 405–426, 427–451, 453–475, 477–498, 499–523, 525–547, 548–571, and 573–595; these read NGNVEKLDLAGMNLTGKISDSISQL, SSLVSFNISCNGFESLLPKSIPP, KSIDISQNSFSGSLFLFSN, SLGLVHLNASGNNLSGNLTEDLGNL, VSLEVLDLRGNFFQGSLPSSFKN, LQKLRFLGLSGNNLTGELPSVLGQLPS, ETAILGYNEFKGPIPPEFGN, INSLKYLDLAIGKLSGEIPSELGKL, KSLETLLLYENNFTGTIPREIGSI, TTLKVLDFSDNALTGEIPMEITKL, KNLQLLNLMRNKLSGSIPPAISSL, QLQVLELWNNTLSGELPSDLGKN, PLQWLDVSSNSFSGEIPSTLCNK, NLTKLILFNNTFTGQIPATLSTC, SLVRVRMQNNLLNGSIPIGFGK, LEKLQRLELAGNRLSGGIPGDISDS, SLSFIDFSRNQIRSSLPSTILSI, NLQAFLVADNFISGEVPDQFQD, CPSLSNLDLSSNTLTGTIPSSIASC, KLVSLNLRNNNLTGEIPRQITTM, SALAVLDLSNNSLTGVLPESIGTS, and ALELLNVSYNKLTGPVPINGFLK. Residue Asn199 is glycosylated (N-linked (GlcNAc...) asparagine). N-linked (GlcNAc...) asparagine glycosylation occurs at Asn271. The N-linked (GlcNAc...) asparagine glycan is linked to Asn341. Asn381, Asn389, and Asn417 each carry an N-linked (GlcNAc...) asparagine glycan. N-linked (GlcNAc...) asparagine glycosylation is found at Asn535, Asn557, and Asn578. The helical transmembrane segment at 634-654 threads the bilayer; the sequence is IVAGWLIGIASVLALGILTIV. The Cytoplasmic segment spans residues 655-1013; that stretch reads TRTLYKKWYS…FSTSPVNGLL (359 aa). Thr691 is subject to Phosphothreonine. Positions 699-983 constitute a Protein kinase domain; it reads IKESNMIGMG…SMLGEAKPRR (285 aa). Residues 705-713 and Lys728 each bind ATP; that span reads IGMGATGIV. Thr710 is modified (phosphothreonine; by autocatalysis). Phosphothreonine; by autocatalysis is present on residues Thr741 and Thr742. Phosphotyrosine is present on residues Tyr777 and Tyr818. Asp831 serves as the catalytic Proton acceptor. Thr862 bears the Phosphothreonine; by autocatalysis mark. Ser864 carries the post-translational modification Phosphoserine; by autocatalysis. A Phosphotyrosine modification is found at Tyr872. Residue Tyr879 is modified to Phosphotyrosine; by autocatalysis. Residues Thr880 and Thr992 each carry the phosphothreonine; by autocatalysis modification. The disordered stretch occupies residues 976–1013; the sequence is LGEAKPRRKSNSNEENTSRSLAEKHSSVFSTSPVNGLL. The segment covering 1002-1013 has biased composition (polar residues); that stretch reads SVFSTSPVNGLL.

This sequence belongs to the protein kinase superfamily. Ser/Thr protein kinase family. Homodimer. Interacts with MDIS1 and LURE1.2. Autophosphorylation induced by the interaction with LURE1.2. As to expression, expressed in pollen tubes.

The protein resides in the cell membrane. The enzyme catalyses L-seryl-[protein] + ATP = O-phospho-L-seryl-[protein] + ADP + H(+). It carries out the reaction L-threonyl-[protein] + ATP = O-phospho-L-threonyl-[protein] + ADP + H(+). In terms of biological role, involved in the regulation of procambium maintenance and polarity during vascular-tissue development. Involved in the pollen tube perception of the female signal. Phosphorylates MDSI1. The sequence is that of MDIS1-interacting receptor like kinase 1 from Arabidopsis thaliana (Mouse-ear cress).